The chain runs to 152 residues: SsrA-binding protein (152 aa).

Belongs to the SmpB family.

It localises to the cytoplasm. Functionally, required for rescue of stalled ribosomes mediated by trans-translation. Binds to transfer-messenger RNA (tmRNA), required for stable association of tmRNA with ribosomes. tmRNA and SmpB together mimic tRNA shape, replacing the anticodon stem-loop with SmpB. tmRNA is encoded by the ssrA gene; the 2 termini fold to resemble tRNA(Ala) and it encodes a 'tag peptide', a short internal open reading frame. During trans-translation Ala-aminoacylated tmRNA acts like a tRNA, entering the A-site of stalled ribosomes, displacing the stalled mRNA. The ribosome then switches to translate the ORF on the tmRNA; the nascent peptide is terminated with the 'tag peptide' encoded by the tmRNA and targeted for degradation. The ribosome is freed to recommence translation, which seems to be the essential function of trans-translation. The polypeptide is SsrA-binding protein (Rickettsia massiliae (strain Mtu5)).